Here is a 314-residue protein sequence, read N- to C-terminus: 4-hydroxy-3-methylbut-2-enyl diphosphate reductase (314 aa).

Position 12 (C12) interacts with [4Fe-4S] cluster. Residues H41 and H74 each coordinate (2E)-4-hydroxy-3-methylbut-2-enyl diphosphate. Residues H41 and H74 each contribute to the dimethylallyl diphosphate site. Isopentenyl diphosphate-binding residues include H41 and H74. Position 96 (C96) interacts with [4Fe-4S] cluster. H124 contributes to the (2E)-4-hydroxy-3-methylbut-2-enyl diphosphate binding site. Position 124 (H124) interacts with dimethylallyl diphosphate. H124 is a binding site for isopentenyl diphosphate. The Proton donor role is filled by E126. A (2E)-4-hydroxy-3-methylbut-2-enyl diphosphate-binding site is contributed by T167. C197 lines the [4Fe-4S] cluster pocket. S225, S226, N227, and S269 together coordinate (2E)-4-hydroxy-3-methylbut-2-enyl diphosphate. Dimethylallyl diphosphate contacts are provided by S225, S226, N227, and S269. Positions 225, 226, 227, and 269 each coordinate isopentenyl diphosphate.

The protein belongs to the IspH family. It depends on [4Fe-4S] cluster as a cofactor.

The catalysed reaction is isopentenyl diphosphate + 2 oxidized [2Fe-2S]-[ferredoxin] + H2O = (2E)-4-hydroxy-3-methylbut-2-enyl diphosphate + 2 reduced [2Fe-2S]-[ferredoxin] + 2 H(+). It catalyses the reaction dimethylallyl diphosphate + 2 oxidized [2Fe-2S]-[ferredoxin] + H2O = (2E)-4-hydroxy-3-methylbut-2-enyl diphosphate + 2 reduced [2Fe-2S]-[ferredoxin] + 2 H(+). The protein operates within isoprenoid biosynthesis; dimethylallyl diphosphate biosynthesis; dimethylallyl diphosphate from (2E)-4-hydroxy-3-methylbutenyl diphosphate: step 1/1. It functions in the pathway isoprenoid biosynthesis; isopentenyl diphosphate biosynthesis via DXP pathway; isopentenyl diphosphate from 1-deoxy-D-xylulose 5-phosphate: step 6/6. Catalyzes the conversion of 1-hydroxy-2-methyl-2-(E)-butenyl 4-diphosphate (HMBPP) into a mixture of isopentenyl diphosphate (IPP) and dimethylallyl diphosphate (DMAPP). Acts in the terminal step of the DOXP/MEP pathway for isoprenoid precursor biosynthesis. The sequence is that of 4-hydroxy-3-methylbut-2-enyl diphosphate reductase from Actinobacillus succinogenes (strain ATCC 55618 / DSM 22257 / CCUG 43843 / 130Z).